The sequence spans 221 residues: Flagellar L-ring protein 2 (221 aa).

Positions 1-16 (MKRFLILTPMVLALCG) are cleaved as a signal peptide. C17 carries the N-palmitoyl cysteine lipid modification. C17 carries S-diacylglycerol cysteine lipidation.

The protein belongs to the FlgH family. The basal body constitutes a major portion of the flagellar organelle and consists of four rings (L,P,S, and M) mounted on a central rod.

Its subcellular location is the cell outer membrane. The protein resides in the bacterial flagellum basal body. Its function is as follows. Assembles around the rod to form the L-ring and probably protects the motor/basal body from shearing forces during rotation. This chain is Flagellar L-ring protein 2, found in Yersinia pseudotuberculosis serotype I (strain IP32953).